A 368-amino-acid chain; its full sequence is DNA replication and repair protein RecF (368 aa).

Gly30 to Thr37 lines the ATP pocket.

This sequence belongs to the RecF family.

It is found in the cytoplasm. Its function is as follows. The RecF protein is involved in DNA metabolism; it is required for DNA replication and normal SOS inducibility. RecF binds preferentially to single-stranded, linear DNA. It also seems to bind ATP. This is DNA replication and repair protein RecF from Marinomonas sp. (strain MWYL1).